Reading from the N-terminus, the 211-residue chain is N-(5'-phosphoribosyl)anthranilate isomerase (211 aa).

It belongs to the TrpF family.

The enzyme catalyses N-(5-phospho-beta-D-ribosyl)anthranilate = 1-(2-carboxyphenylamino)-1-deoxy-D-ribulose 5-phosphate. Its pathway is amino-acid biosynthesis; L-tryptophan biosynthesis; L-tryptophan from chorismate: step 3/5. The chain is N-(5'-phosphoribosyl)anthranilate isomerase from Hyphomonas neptunium (strain ATCC 15444).